Reading from the N-terminus, the 681-residue chain is UvrABC system protein C (681 aa).

The disordered stretch occupies residues 1–23 (MNGKKLPDGGILFDETDDEDDDA). A compositionally biased stretch (acidic residues) spans 14 to 23 (DETDDEDDDA). The GIY-YIG domain occupies 67–145 (NSPGVYRMFN…IKRLRPRFNV (79 aa)). Residues 255 to 290 (QAVKTAIARQMNEASEDLDFERAAIYRDRLAALSHV) form the UVR domain.

It belongs to the UvrC family. In terms of assembly, interacts with UvrB in an incision complex.

It localises to the cytoplasm. In terms of biological role, the UvrABC repair system catalyzes the recognition and processing of DNA lesions. UvrC both incises the 5' and 3' sides of the lesion. The N-terminal half is responsible for the 3' incision and the C-terminal half is responsible for the 5' incision. This chain is UvrABC system protein C, found in Agrobacterium fabrum (strain C58 / ATCC 33970) (Agrobacterium tumefaciens (strain C58)).